Reading from the N-terminus, the 296-residue chain is Chronophin (296 aa).

Asp-25 acts as the Nucleophile in catalysis. Mg(2+) is bound by residues Asp-25 and Asp-27. Asp-27 (proton donor) is an active-site residue. Substrate-binding positions include 58–60, His-182, and Lys-213; that span reads SNN. Asp-238 contacts Mg(2+).

Belongs to the HAD-like hydrolase superfamily. As to quaternary structure, homodimer. The cofactor is Mg(2+). In terms of tissue distribution, ubiquitously expressed (at protein level). Highly expressed in all the regions of central nerve system except the spinal cord. Also expressed at high level in liver and testis. In fetus, it is weakly expressed in all organs except brain.

The protein resides in the cytoplasm. Its subcellular location is the cytosol. It is found in the cytoskeleton. The protein localises to the cell projection. It localises to the ruffle membrane. The protein resides in the lamellipodium membrane. Its subcellular location is the cell membrane. The enzyme catalyses pyridoxal 5'-phosphate + H2O = pyridoxal + phosphate. It catalyses the reaction pyridoxine 5'-phosphate + H2O = pyridoxine + phosphate. It carries out the reaction pyridoxamine + phosphate = pyridoxamine 5'-phosphate + H2O. The catalysed reaction is O-phospho-L-seryl-[protein] + H2O = L-seryl-[protein] + phosphate. With respect to regulation, inhibited by NaF, Zn(2+), Ca(2+), Mn(2+) and EDTA. Functionally, functions as a pyridoxal phosphate (PLP) phosphatase, which also catalyzes the dephosphorylation of pyridoxine 5'-phosphate (PNP) and pyridoxamine 5'-phosphate (PMP), with order of substrate preference PLP &gt; PNP &gt; PMP and therefore plays a role in vitamin B6 metabolism. Also functions as a protein serine phosphatase that specifically dephosphorylates 'Ser-3' in proteins of the actin-depolymerizing factor (ADF)/cofilin family like CFL1 and DSTN. Thereby, regulates cofilin-dependent actin cytoskeleton reorganization, being required for normal progress through mitosis and normal cytokinesis. Does not dephosphorylate phosphothreonines in LIMK1. Does not dephosphorylate peptides containing phosphotyrosine. In Homo sapiens (Human), this protein is Chronophin.